Reading from the N-terminus, the 205-residue chain is Holliday junction branch migration complex subunit RuvA (205 aa).

The interval 1–64 (MIGKLKGLID…EDQIKLFGFR (64 aa)) is domain I. Positions 65 to 143 (SDVEREWFRL…AFADVDPGVI (79 aa)) are domain II. The flexible linker stretch occupies residues 144–154 (RLSGAIEDSRA). The domain III stretch occupies residues 154–205 (APQPIADAISALINLGYGQPQAAAAIAAASRAAGDKAETAQLIRLGLKELAK).

The protein belongs to the RuvA family. As to quaternary structure, homotetramer. Forms an RuvA(8)-RuvB(12)-Holliday junction (HJ) complex. HJ DNA is sandwiched between 2 RuvA tetramers; dsDNA enters through RuvA and exits via RuvB. An RuvB hexamer assembles on each DNA strand where it exits the tetramer. Each RuvB hexamer is contacted by two RuvA subunits (via domain III) on 2 adjacent RuvB subunits; this complex drives branch migration. In the full resolvosome a probable DNA-RuvA(4)-RuvB(12)-RuvC(2) complex forms which resolves the HJ.

The protein localises to the cytoplasm. Functionally, the RuvA-RuvB-RuvC complex processes Holliday junction (HJ) DNA during genetic recombination and DNA repair, while the RuvA-RuvB complex plays an important role in the rescue of blocked DNA replication forks via replication fork reversal (RFR). RuvA specifically binds to HJ cruciform DNA, conferring on it an open structure. The RuvB hexamer acts as an ATP-dependent pump, pulling dsDNA into and through the RuvAB complex. HJ branch migration allows RuvC to scan DNA until it finds its consensus sequence, where it cleaves and resolves the cruciform DNA. This Bradyrhizobium sp. (strain BTAi1 / ATCC BAA-1182) protein is Holliday junction branch migration complex subunit RuvA.